Here is a 150-residue protein sequence, read N- to C-terminus: D-aminoacyl-tRNA deacylase (150 aa).

The short motif at 136–137 (GP) is the Gly-cisPro motif, important for rejection of L-amino acids element.

This sequence belongs to the DTD family. As to quaternary structure, homodimer.

Its subcellular location is the cytoplasm. The catalysed reaction is glycyl-tRNA(Ala) + H2O = tRNA(Ala) + glycine + H(+). It carries out the reaction a D-aminoacyl-tRNA + H2O = a tRNA + a D-alpha-amino acid + H(+). Functionally, an aminoacyl-tRNA editing enzyme that deacylates mischarged D-aminoacyl-tRNAs. Also deacylates mischarged glycyl-tRNA(Ala), protecting cells against glycine mischarging by AlaRS. Acts via tRNA-based rather than protein-based catalysis; rejects L-amino acids rather than detecting D-amino acids in the active site. By recycling D-aminoacyl-tRNA to D-amino acids and free tRNA molecules, this enzyme counteracts the toxicity associated with the formation of D-aminoacyl-tRNA entities in vivo and helps enforce protein L-homochirality. In Staphylococcus haemolyticus (strain JCSC1435), this protein is D-aminoacyl-tRNA deacylase.